Here is a 329-residue protein sequence, read N- to C-terminus: Serine/threonine-protein phosphatase PP2A catalytic subunit (329 aa).

The tract at residues 1-25 (MDNNMEIDAARSPEPHHLSPTTDPG) is disordered. The segment covering 8–17 (DAARSPEPHH) has biased composition (basic and acidic residues). Mn(2+) is bound by residues Asp-77, His-79, Asp-105, and Asn-137. Residue His-138 is the Proton donor of the active site. Mn(2+) is bound by residues His-187 and His-261. The residue at position 329 (Leu-329) is a Leucine methyl ester.

Belongs to the PPP phosphatase family. PP-2A subfamily. Mn(2+) serves as cofactor.

It carries out the reaction O-phospho-L-seryl-[protein] + H2O = L-seryl-[protein] + phosphate. It catalyses the reaction O-phospho-L-threonyl-[protein] + H2O = L-threonyl-[protein] + phosphate. Involved in hyphal morphogenesis. The chain is Serine/threonine-protein phosphatase PP2A catalytic subunit (pphA) from Emericella nidulans (strain FGSC A4 / ATCC 38163 / CBS 112.46 / NRRL 194 / M139) (Aspergillus nidulans).